The chain runs to 493 residues: MSFKDLRSFISHLEECGELKRVSYPVDPYLEMTEIADRVLRAGGPALLFEQPKGHSMPVLANLFGTPKRVAMALGKEDPLALRDVGELLAFLKEPEPPRGFKDAIAKIPMFKQALNMPPKTVSRAPCQEVVMTGDDVDLTKLPIQHCWPGDVAPLVTWGLTITKGPRQKRQNLGIYRQQLLGKNKLIMRWLSHRGGALDFRDFQEKHPGENYPVVVALGSDPVTILGAVTPVPDSMSEYAFAGLLRGERTEVVKALSCDLEVPATSEIILEGYIAPGEMAEEGPYGDHTGYYNETDSFPVFTVTHISHRKDAIYHSTYTGRPPDEPAMLGVALNEVFVPILRKQYPEIVDFYLPPEGCSYRMAVISIRKQYPGHAKRVMMGAWSFLRQFMYTKFIVVVDEDVNCRDWQDVIWAITTRMDPTRDTVMIDNTPIDYLDFASPVAGLGSKMGLDATNKWEGETNREWGTPIVMDEAVKRRVDDIWDELGIEQSPTL.

Position 172 (Asn-172) interacts with Mn(2+). Prenylated FMN is bound by residues 175 to 177 (IYR), 189 to 191 (RWL), and 194 to 195 (RG). Glu-238 serves as a coordination point for Mn(2+). Catalysis depends on Asp-287, which acts as the Proton donor.

This sequence belongs to the UbiD family. As to quaternary structure, homohexamer. The cofactor is prenylated FMN. It depends on Mn(2+) as a cofactor.

The protein resides in the cell membrane. It carries out the reaction a 4-hydroxy-3-(all-trans-polyprenyl)benzoate + H(+) = a 2-(all-trans-polyprenyl)phenol + CO2. The protein operates within cofactor biosynthesis; ubiquinone biosynthesis. Its function is as follows. Catalyzes the decarboxylation of 3-octaprenyl-4-hydroxy benzoate to 2-octaprenylphenol, an intermediate step in ubiquinone biosynthesis. The protein is 3-octaprenyl-4-hydroxybenzoate carboxy-lyase of Shewanella amazonensis (strain ATCC BAA-1098 / SB2B).